A 397-amino-acid polypeptide reads, in one-letter code: Elongation factor Tu (397 aa).

One can recognise a tr-type G domain in the interval 10-207 (KPHVNIGTIG…ACDSYIPEPQ (198 aa)). A G1 region spans residues 19–26 (GHIDHGKT). 19–26 (GHIDHGKT) serves as a coordination point for GTP. Thr-26 is a Mg(2+) binding site. A G2 region spans residues 60–64 (GITIA). Residues 81 to 84 (DCPG) form a G3 region. GTP-binding positions include 81–85 (DCPGH) and 136–139 (NKCD). Residues 136–139 (NKCD) are G4. The G5 stretch occupies residues 174–176 (SAL).

The protein belongs to the TRAFAC class translation factor GTPase superfamily. Classic translation factor GTPase family. EF-Tu/EF-1A subfamily. As to quaternary structure, monomer.

The protein resides in the cytoplasm. The catalysed reaction is GTP + H2O = GDP + phosphate + H(+). GTP hydrolase that promotes the GTP-dependent binding of aminoacyl-tRNA to the A-site of ribosomes during protein biosynthesis. The protein is Elongation factor Tu of Nitratidesulfovibrio vulgaris (strain ATCC 29579 / DSM 644 / CCUG 34227 / NCIMB 8303 / VKM B-1760 / Hildenborough) (Desulfovibrio vulgaris).